A 947-amino-acid polypeptide reads, in one-letter code: MEFSWGSGQESQRLLLSFLLLAIWEAGNSQIHYSIPEEAKHGTFVGRIAQDLGLELTELVPRLFRVASKDRGDLLEVNLQNGILFVNSRIDREELCGRSAECSIHLEVIVDRPLQVFHVEVEVRDINDNPPRFPTTQKNLFIAESRPLDTWFPLEGASDADIGINAVLTYRLSPNDYFSLEKPSNDERVKGLGLVLRKSLDREETPEIILVLTVTDGGKPELTGSVQLLITVLDANDNAPVFDRSLYTVKLPENVPNGTLVVKVNASDLDEGVNGDIMYSFSTDISPNVKYKFHIDPVSGEIIVKGYIDFEECKSYEILIEGIDKGQLPLSGHCKVIVQVEDINDNVPELEFKSLSLPIRENSPVGTVIALISVSDRDTGVNGQVTCSLTSHVPFKLVSTFKNYYSLVLDSALDRETTADYKVVVTARDGGSPSLWATASVSVEVADVNDNAPVFAQPEYTVFVKENNPPGAHIFTVSAMDADAQENALVSYSLVERRVGERLLSSYVSVHAESGKVFALQPLDHEELELLRFQVSARDAGVPALGSNVTLQVFVLDENDNAPTLLEPEAGVSGGIVSRLVSRSVGAGHVVAKVRAVDADSGYNAWLSYELQSSEGNSRSLFRVGLYTGEISTTRILDEADSPRQRLLVLVKDHGDPAMIVTATVLVSLVENGPVPKAPSRVSTSVTHSEASLVDVNVYLIIAICAVSSLLVLTLLLYTALRCSTVPSESVCGPPKPVMVCSSAVGSWSYSQQRRQRVCSGEYPPKTDLMAFSPSLSDSRDREDQLQSAEDSSGKPRQPNPDWRYSASLRAGMHSSVHLEEAGILRAGPGGPDQQWPTVSSATPEPEAGEVSPPVGAGVNSNSWTFKYGPGNPKQSGPGELPDKFIIPGSPAIISIRQEPANNQIDKSDFITFGKKEETKKKKKKKKGNKTQEKKEKGNSTTDNSDQ.

The signal sequence occupies residues methionine 1–serine 29. 6 Cadherin domains span residues glutamine 30 to phenylalanine 133, proline 134 to phenylalanine 242, aspartate 243 to leucine 350, glutamate 351 to phenylalanine 455, alanine 456 to leucine 565, and serine 573 to arginine 681. The Extracellular segment spans residues glutamine 30–asparagine 697. Cysteine 96 and cysteine 102 are oxidised to a cystine. N-linked (GlcNAc...) asparagine glycans are attached at residues asparagine 257 and asparagine 265. An O-linked (Man) threonine glycan is attached at threonine 438. 2 O-linked (Man) serine glycosylation sites follow: serine 440 and serine 442. Asparagine 548 is a glycosylation site (N-linked (GlcNAc...) asparagine). A helical membrane pass occupies residues valine 698–tyrosine 718. The Cytoplasmic segment spans residues threonine 719–glutamine 947. PXXP repeat units lie at residues proline 734–proline 737, proline 774–serine 777, proline 796–proline 799, proline 829–proline 832, proline 870–proline 873, and proline 888–proline 891. Residues proline 734 to proline 891 are 6 X 4 AA repeats of P-X-X-P. Positions valine 738–glutamine 947 are required for interaction with FYN. Disordered regions lie at residues glycine 761 to tyrosine 805 and isoleucine 824 to proline 853. Positions proline 891–glutamine 947 are disordered. Over residues aspartate 906–lysine 920 the composition is skewed to basic and acidic residues.

As to quaternary structure, forms homodimers in trans (molecules expressed by two different cells). Forms promiscuous heterodimers in cis (at the plasma membrane of the same cell) with other protocadherins. Interacts with FYN. In terms of tissue distribution, detected in brain throughout embryonic development. Detected in adult brain, in particular in cerebellum and forebrain.

The protein localises to the cell membrane. In terms of biological role, calcium-dependent cell-adhesion protein involved in cells self-recognition and non-self discrimination. Thereby, it is involved in the establishment and maintenance of specific neuronal connections in the brain. In Mus musculus (Mouse), this protein is Protocadherin alpha-4.